The sequence spans 79 residues: Small ribosomal subunit protein bS18 (79 aa).

The protein belongs to the bacterial ribosomal protein bS18 family. Part of the 30S ribosomal subunit. Forms a tight heterodimer with protein bS6.

Its function is as follows. Binds as a heterodimer with protein bS6 to the central domain of the 16S rRNA, where it helps stabilize the platform of the 30S subunit. The sequence is that of Small ribosomal subunit protein bS18 from Onion yellows phytoplasma (strain OY-M).